Reading from the N-terminus, the 270-residue chain is 3-phenylpropionate-dihydrodiol/cinnamic acid-dihydrodiol dehydrogenase (270 aa).

Phenylalanine 10–alanine 34 is an NAD(+) binding site. Residue serine 143 coordinates substrate. Tyrosine 156 serves as the catalytic Proton acceptor.

This sequence belongs to the short-chain dehydrogenases/reductases (SDR) family.

It catalyses the reaction 3-(cis-5,6-dihydroxycyclohexa-1,3-dien-1-yl)propanoate + NAD(+) = 3-(2,3-dihydroxyphenyl)propanoate + NADH + H(+). The catalysed reaction is (2E)-3-(cis-5,6-dihydroxycyclohexa-1,3-dien-1-yl)prop-2-enoate + NAD(+) = (2E)-3-(2,3-dihydroxyphenyl)prop-2-enoate + NADH + H(+). It functions in the pathway aromatic compound metabolism; 3-phenylpropanoate degradation. Its function is as follows. Converts 3-phenylpropionate-dihydrodiol (PP-dihydrodiol) and cinnamic acid-dihydrodiol (CI-dihydrodiol) into 3-(2,3-dihydroxylphenyl)propanoic acid (DHPP) and 2,3-dihydroxicinnamic acid (DHCI), respectively. This chain is 3-phenylpropionate-dihydrodiol/cinnamic acid-dihydrodiol dehydrogenase, found in Shigella sonnei (strain Ss046).